The sequence spans 547 residues: Mercuric reductase (547 aa).

The 64-residue stretch at 4–67 folds into the HMA domain; the sequence is NSYKIPIQGM…NISAAGYQPG (64 aa). A metal cation contacts are provided by C15 and C18. Positions 97, 117, and 122 each coordinate FAD. Residues C123 and C128 are joined by a disulfide bond. The FAD site is built by K132, A196, D388, and V396. Residues C544 and C545 each contribute to the Hg(2+) site.

This sequence belongs to the class-I pyridine nucleotide-disulfide oxidoreductase family. Homodimer. The cofactor is FAD.

It catalyses the reaction Hg + NADP(+) + H(+) = Hg(2+) + NADPH. Functionally, resistance to Hg(2+) in bacteria appears to be governed by a specialized system which includes mercuric reductase. MerA protein is responsible for volatilizing mercury as Hg(0). This Staphylococcus aureus protein is Mercuric reductase (merA).